Here is a 329-residue protein sequence, read N- to C-terminus: Phosphoenolpyruvate transferase (329 aa).

Position 61 (aspartate 61) interacts with 7,8-didemethyl-8-hydroxy-5-deazariboflavin.

Belongs to the CofD family. In terms of assembly, homodimer. It depends on Mg(2+) as a cofactor.

The enzyme catalyses enolpyruvoyl-2-diphospho-5'-guanosine + 7,8-didemethyl-8-hydroxy-5-deazariboflavin = dehydro coenzyme F420-0 + GMP + H(+). It functions in the pathway cofactor biosynthesis; coenzyme F420 biosynthesis. Catalyzes the transfer of the phosphoenolpyruvate moiety from enoylpyruvoyl-2-diphospho-5'-guanosine (EPPG) to 7,8-didemethyl-8-hydroxy-5-deazariboflavin (FO) with the formation of dehydro coenzyme F420-0 and GMP. The sequence is that of Phosphoenolpyruvate transferase from Mycobacterium ulcerans (strain Agy99).